We begin with the raw amino-acid sequence, 104 residues long: MKYAIIEASGKQFWVEPGRFYDFNSLNVEPGDKIALTRVLLINDNGNITVGKPCLDNVKVEATVLGHLRGQKVTVYKMQPKKKTRKKQGHRTNLTRLLIDNIIN.

This sequence belongs to the bacterial ribosomal protein bL21 family. In terms of assembly, part of the 50S ribosomal subunit.

Its subcellular location is the plastid. It localises to the chloroplast. Its function is as follows. This protein binds to 23S rRNA. In Guillardia theta (Cryptophyte), this protein is Large ribosomal subunit protein bL21c.